A 272-amino-acid polypeptide reads, in one-letter code: sn-1 stearoyl-lipid 9-desaturase (272 aa).

2 consecutive transmembrane segments (helical) span residues 11–31 (INWVNTLFFLGLHIGALFAFI) and 39–59 (AVGVALLLYWITGGLGITLGF). Residues 60–65 (HRLVTH) carry the Histidine box-1 motif. A Histidine box-2 motif is present at residues 97-101 (HRIHH). A helical membrane pass occupies residues 160–180 (IALGLLLLYLGGWSFVVWGVF). The Histidine box-3 signature appears at 230-234 (HHAFQ).

The protein belongs to the fatty acid desaturase type 2 family. It depends on Fe(2+) as a cofactor.

The protein localises to the membrane. It carries out the reaction a 1-octadecanoyl 2-acyl-glycerolipid + 2 reduced [2Fe-2S]-[ferredoxin] + O2 + 2 H(+) = a 1-[(9Z)-octadecenoyl]-2-acyl-glycerolipid + 2 oxidized [2Fe-2S]-[ferredoxin] + 2 H2O. Its pathway is lipid metabolism; polyunsaturated fatty acid biosynthesis. In terms of biological role, desaturase involved in fatty acid biosynthesis. Introduces a double bond at carbon 9 of stearoyl groups (18:0) attached to the sn-1 position of the glycerol moiety of membrane glycerolipids. Does not desaturate palmitic acid (16:0), palmitoleic acid (16:1) and cis-vaccenic acid (18:1). The protein is sn-1 stearoyl-lipid 9-desaturase of Anabaena variabilis.